The following is a 409-amino-acid chain: Gamma-glutamyl phosphate reductase (409 aa).

The protein belongs to the gamma-glutamyl phosphate reductase family.

The protein localises to the cytoplasm. It catalyses the reaction L-glutamate 5-semialdehyde + phosphate + NADP(+) = L-glutamyl 5-phosphate + NADPH + H(+). It participates in amino-acid biosynthesis; L-proline biosynthesis; L-glutamate 5-semialdehyde from L-glutamate: step 2/2. Its function is as follows. Catalyzes the NADPH-dependent reduction of L-glutamate 5-phosphate into L-glutamate 5-semialdehyde and phosphate. The product spontaneously undergoes cyclization to form 1-pyrroline-5-carboxylate. In Bartonella tribocorum (strain CIP 105476 / IBS 506), this protein is Gamma-glutamyl phosphate reductase.